A 723-amino-acid chain; its full sequence is CSC1-like protein ERD4 (723 aa).

Residues 1–5 are Cytoplasmic-facing; that stretch reads MEFAS. The chain crosses the membrane as a helical span at residues 6–26; the sequence is FLVSLGTSAIIFVVLMFLFTW. Over 27 to 90 the chain is Extracellular; the sequence is LSRRPGNVPV…TAVYFVFQST (64 aa). The helical transmembrane segment at 91 to 111 threads the bilayer; the sequence is VLGIFALSALLLLPTLLPIAA. Residues 112-148 are Cytoplasmic-facing; that stretch reads TDNNLETSRSATDTTSNGTFSQLDNLSMANITKSSSR. A helical membrane pass occupies residues 149-169; sequence LWAFLGAVYWVSVVTYFMLWK. The Extracellular segment spans residues 170–364; the sequence is AYKHVAALRA…IKFFSRIVRQ (195 aa). Residues 365-385 traverse the membrane as a helical segment; sequence YVIYFLVAITILFYMIPIAFV. Residues 386–416 lie on the Cytoplasmic side of the membrane; the sequence is SAITTLANLQKALPFLKPIVDIAFIRTILES. The helical transmembrane segment at 417-437 threads the bilayer; the sequence is YLPQIALIVFLAMLPKFLMFL. The Extracellular segment spans residues 438 to 456; sequence SKSEGIPSQSHAIRATSGK. The chain crosses the membrane as a helical span at residues 457-477; the sequence is YFYFSVLNVFIGVTLAGSLFE. The Cytoplasmic portion of the chain corresponds to 478–508; it reads NLKALEEKPNSFITLLATSLPKSATFFLTYV. A helical transmembrane segment spans residues 509–529; the sequence is ALKFFVGYGLELSRIIPLIIF. The Extracellular portion of the chain corresponds to 530–572; sequence HLKKKYLCKTEAEVKEAWYPGDLSYATRVPSDMLILTITFCYS. A helical membrane pass occupies residues 573-593; it reads VIAPLILVFGVIYFGLGWLIL. Residues 594–614 are Cytoplasmic-facing; the sequence is RNQALKVYVPSYESYGRMWPH. Residues 615 to 635 form a helical membrane-spanning segment; sequence IHTRILAALFLFQLVMFGYLG. Over 636–637 the chain is Extracellular; sequence VK. A helical transmembrane segment spans residues 638–658; sequence IFVWAILLVPLIFISLIFGYV. Residues 659 to 723 lie on the Cytoplasmic side of the membrane; that stretch reads CRQKFYGGFE…YQDYAAISAA (65 aa).

Belongs to the CSC1 (TC 1.A.17) family.

It localises to the plastid. It is found in the chloroplast membrane. In terms of biological role, acts as an osmosensitive calcium-permeable cation channel. The protein is CSC1-like protein ERD4 (ERD4) of Brassica juncea (Indian mustard).